Consider the following 130-residue polypeptide: Small ribosomal subunit protein uS8 (130 aa).

It belongs to the universal ribosomal protein uS8 family. Part of the 30S ribosomal subunit. Contacts proteins S5 and S12.

Its function is as follows. One of the primary rRNA binding proteins, it binds directly to 16S rRNA central domain where it helps coordinate assembly of the platform of the 30S subunit. The protein is Small ribosomal subunit protein uS8 of Vibrio atlanticus (strain LGP32) (Vibrio splendidus (strain Mel32)).